The following is a 114-amino-acid chain: MEKAEVLEDEYQHLFLKPLLNASTLLITFQGEAEALTVSINEQGEMKKVSPPQTSNLTFYGNQTEIIDLLHGDISLQHLIQSGSLKVKGSFRALLKLEAILWLTNGFFQRILKN.

Residues 21–101 (NASTLLITFQ…RALLKLEAIL (81 aa)) form the SCP2 domain.

The sequence is that of SCP2 domain-containing protein YusD (yusD) from Bacillus subtilis (strain 168).